Consider the following 145-residue polypeptide: Synaptojanin-2-binding protein (145 aa).

Residues 1-117 are Cytoplasmic-facing; that stretch reads MNGRVDYLVT…GPQGEGEPSG (117 aa). The PDZ domain maps to 13–100; sequence EINLTRGPSG…AVSLRVQHRL (88 aa). A helical; Anchor for type IV membrane protein transmembrane segment spans residues 118–138; that stretch reads IPIAMVLVPVFALTMVAAWAF. Residues 139–145 lie on the Mitochondrial intermembrane side of the membrane; the sequence is MRYRQRL.

Binds (via the PDZ domain) to isoform 2A of SYNJ2 (via the unique motif in the C-terminus). Interacts (via C-terminus) with RALBP1. Interacts (via PDZ domain) with ACVR2A (via C-terminus) and ACVR2B (via C-terminus). Forms a ternary complex with ACVR2A and RALBP1. Interacts with MAPK12. Interacts with DLL1; enhances DLL1 protein stability, and promotes notch signaling in endothelial cells.

It localises to the mitochondrion outer membrane. Its subcellular location is the cytoplasm. The protein resides in the perinuclear region. Its function is as follows. Regulates endocytosis of activin type 2 receptor kinases through the Ral/RALBP1-dependent pathway and may be involved in suppression of activin-induced signal transduction. The chain is Synaptojanin-2-binding protein from Bos taurus (Bovine).